The following is a 506-amino-acid chain: BTB/POZ domain-containing protein 16 (506 aa).

Residues 150-206 enclose the BTB domain; it reads INDPAVTRVAFALALKNLYMNEVEMTVDNVLGVLASAHILQFNRLFRKCVSTMLNRL.

This Rattus norvegicus (Rat) protein is BTB/POZ domain-containing protein 16 (Btbd16).